The following is a 201-amino-acid chain: ATP-dependent Clp protease proteolytic subunit (201 aa).

Catalysis depends on serine 101, which acts as the Nucleophile. Histidine 126 is a catalytic residue.

The protein belongs to the peptidase S14 family. As to quaternary structure, component of the chloroplastic Clp protease core complex.

The protein localises to the plastid. It is found in the chloroplast stroma. The enzyme catalyses Hydrolysis of proteins to small peptides in the presence of ATP and magnesium. alpha-casein is the usual test substrate. In the absence of ATP, only oligopeptides shorter than five residues are hydrolyzed (such as succinyl-Leu-Tyr-|-NHMec, and Leu-Tyr-Leu-|-Tyr-Trp, in which cleavage of the -Tyr-|-Leu- and -Tyr-|-Trp bonds also occurs).. Cleaves peptides in various proteins in a process that requires ATP hydrolysis. Has a chymotrypsin-like activity. Plays a major role in the degradation of misfolded proteins. In Chlorella vulgaris (Green alga), this protein is ATP-dependent Clp protease proteolytic subunit.